Consider the following 398-residue polypeptide: S-adenosylmethionine synthase (398 aa).

Positions 1 to 21 (MAANRRLFTSESVTEGHPDKM) are disordered. His-17 is an ATP binding site. Mg(2+) is bound at residue Asp-19. Residue Glu-45 participates in K(+) binding. L-methionine-binding residues include Glu-58 and Gln-101. Residues 101–111 (QSADIAGGVNQ) are flexible loop. Residues 177–179 (DGK), 244–245 (RF), Asp-253, 259–260 (RK), Ala-276, and Lys-280 contribute to the ATP site. Asp-253 contacts L-methionine. Lys-284 serves as a coordination point for L-methionine.

The protein belongs to the AdoMet synthase family. As to quaternary structure, homotetramer; dimer of dimers. Mg(2+) is required as a cofactor. Requires K(+) as cofactor.

The protein resides in the cytoplasm. It catalyses the reaction L-methionine + ATP + H2O = S-adenosyl-L-methionine + phosphate + diphosphate. The protein operates within amino-acid biosynthesis; S-adenosyl-L-methionine biosynthesis; S-adenosyl-L-methionine from L-methionine: step 1/1. In terms of biological role, catalyzes the formation of S-adenosylmethionine (AdoMet) from methionine and ATP. The overall synthetic reaction is composed of two sequential steps, AdoMet formation and the subsequent tripolyphosphate hydrolysis which occurs prior to release of AdoMet from the enzyme. This is S-adenosylmethionine synthase from Oceanobacillus iheyensis (strain DSM 14371 / CIP 107618 / JCM 11309 / KCTC 3954 / HTE831).